The following is a 276-amino-acid chain: MKLCGFEVGLDQPLFLIAGPCVIESMQLQLDTAGKLKEVTDKLGVNFIFKSSFDKANRTSGTAFRGPGMEEGLKVLAEVRKQIGVPVLTDVHEYTPMDEVASVVDVLQTPAFLVRQTDFIRKVCSAGKPVNIKKGQFLAPWDMKPVVEKAKATGNEQIMVCERGASFGYNNLVSDMRSLAVMRDTGCPVVFDATHSVQLPGGQGTSSGGQREHVPVLARAAVAVGISGLFAETHPDPSKALSDGPNAWPLDQMEALLETLMELDAVTKKHGFSRFA.

Belongs to the KdsA family.

The protein resides in the cytoplasm. The enzyme catalyses D-arabinose 5-phosphate + phosphoenolpyruvate + H2O = 3-deoxy-alpha-D-manno-2-octulosonate-8-phosphate + phosphate. It functions in the pathway carbohydrate biosynthesis; 3-deoxy-D-manno-octulosonate biosynthesis; 3-deoxy-D-manno-octulosonate from D-ribulose 5-phosphate: step 2/3. In Stenotrophomonas maltophilia (strain K279a), this protein is 2-dehydro-3-deoxyphosphooctonate aldolase.